The chain runs to 49 residues: MRVNVTLACTECGDRNYISTKNKRNNPERVEMKKYCSRDNKHTLHRETK.

Residues 21–49 (KNKRNNPERVEMKKYCSRDNKHTLHRETK) form a disordered region. Positions 25 to 49 (NNPERVEMKKYCSRDNKHTLHRETK) are enriched in basic and acidic residues.

The protein belongs to the bacterial ribosomal protein bL33 family.

The polypeptide is Large ribosomal subunit protein bL33A (Staphylococcus epidermidis (strain ATCC 35984 / DSM 28319 / BCRC 17069 / CCUG 31568 / BM 3577 / RP62A)).